An 889-amino-acid chain; its full sequence is Rho GTPase-activating protein 27 (889 aa).

The SH3 domain maps to 6–69 (VGDVYVLVEH…PAQYVRELPA (64 aa)). Positions 104 to 132 (AGPDGAPEESGGRASSLCGPAQRGAATQR) are disordered. Phosphoserine occurs at positions 156, 216, and 249. 2 consecutive WW domains span residues 246–280 (PLPS…SPFE) and 299–333 (VSLE…DEAE). Positions 329 to 341 (EDEAENEPEEELE) are enriched in acidic residues. The segment at 329–397 (EDEAENEPEE…SPLTTPPGWS (69 aa)) is disordered. At serine 347 the chain carries Phosphoserine. Over residues 383 to 395 (EPGPTSPLTTPPG) the composition is skewed to low complexity. A WW 3 domain is found at 411 to 444 (HFTQEQWVRLEDPHGKPYFYNPEDSSVRWELPQV). Residues 447–474 (PAPRSIHKSSQDGDTPAQASPPEEKVPA) are disordered. Phosphoserine is present on serine 456. Threonine 461 carries the phosphothreonine modification. Serine 466 carries the phosphoserine modification. The PH domain maps to 496-612 (TLDKAGVLHR…WHKAIAQGIQ (117 aa)). Positions 617–655 (ELPPEESESSRVDFGSSERLGSWQEKEEDARPNAAAPAL) are disordered. The region spanning 697 to 886 (CALAALCERE…LILQQCADIF (190 aa)) is the Rho-GAP domain.

In terms of assembly, interacts with SH3KBP1/CIN85. As to expression, expressed in germinal center B-cell, spleen, chronic lymphocytic leukemia, pancreatic cancer and lung cancer.

It localises to the cytoplasm. It is found in the membrane. Functionally, rho GTPase-activating protein which may be involved in clathrin-mediated endocytosis. GTPase activators for the Rho-type GTPases act by converting them to an inactive GDP-bound state. Has activity toward CDC42 and RAC1. This Homo sapiens (Human) protein is Rho GTPase-activating protein 27.